A 324-amino-acid polypeptide reads, in one-letter code: tRNA U34 carboxymethyltransferase (324 aa).

Residues lysine 91, tryptophan 105, lysine 110, glycine 130, 152–154, 181–182, methionine 196, tyrosine 200, and arginine 315 contribute to the carboxy-S-adenosyl-L-methionine site; these read DPS and IE.

The protein belongs to the class I-like SAM-binding methyltransferase superfamily. CmoB family. As to quaternary structure, homotetramer.

It carries out the reaction carboxy-S-adenosyl-L-methionine + 5-hydroxyuridine(34) in tRNA = 5-carboxymethoxyuridine(34) in tRNA + S-adenosyl-L-homocysteine + H(+). Functionally, catalyzes carboxymethyl transfer from carboxy-S-adenosyl-L-methionine (Cx-SAM) to 5-hydroxyuridine (ho5U) to form 5-carboxymethoxyuridine (cmo5U) at position 34 in tRNAs. The sequence is that of tRNA U34 carboxymethyltransferase from Aliivibrio fischeri (strain ATCC 700601 / ES114) (Vibrio fischeri).